The chain runs to 39 residues: Phosphate starvation-inducible protein 1 (39 aa).

It is found in the cell outer membrane. This is Phosphate starvation-inducible protein 1 from Pseudomonas fluorescens.